We begin with the raw amino-acid sequence, 147 residues long: Large ribosomal subunit protein bL9 (147 aa).

The protein belongs to the bacterial ribosomal protein bL9 family.

In terms of biological role, binds to the 23S rRNA. This chain is Large ribosomal subunit protein bL9, found in Campylobacter jejuni subsp. doylei (strain ATCC BAA-1458 / RM4099 / 269.97).